Reading from the N-terminus, the 361-residue chain is KDEL-tailed cysteine endopeptidase CEP2 (361 aa).

Positions 1–20 are cleaved as a signal peptide; that stretch reads MKKLLLIFLFSLVILQTACG. Positions 21-127 are cleaved as a propeptide — activation peptide; that stretch reads FDYDDKEIES…FMYDHENLSK (107 aa). 2 N-linked (GlcNAc...) asparagine glycosylation sites follow: Asn75 and Asn124. 3 disulfide bridges follow: Cys149/Cys191, Cys183/Cys224, and Cys282/Cys333. The active site involves Cys152. Active-site residues include His288 and Asn308. A Prevents secretion from ER motif is present at residues 358 to 361; the sequence is KDEL.

The protein belongs to the peptidase C1 family. Expressed in roots, stems, rosette and cauline leaves, flowers, buds and green siliques. Found in the tip of young primary leaves, in very young root tips and at later stages in all tissues of lateral root, including the vascular bundle. Not expressed in lateral root primordia, while directly emerging through the epidermis.

It is found in the endoplasmic reticulum. In terms of biological role, involved in the final stage of developmental programmed cell death and in intercalation of new cells. Cleaves extensins, thus probably supporting the final cell collapse. This is KDEL-tailed cysteine endopeptidase CEP2 from Arabidopsis thaliana (Mouse-ear cress).